A 566-amino-acid polypeptide reads, in one-letter code: Proline--tRNA ligase (566 aa).

This sequence belongs to the class-II aminoacyl-tRNA synthetase family. ProS type 1 subfamily. In terms of assembly, homodimer.

It is found in the cytoplasm. The enzyme catalyses tRNA(Pro) + L-proline + ATP = L-prolyl-tRNA(Pro) + AMP + diphosphate. Its function is as follows. Catalyzes the attachment of proline to tRNA(Pro) in a two-step reaction: proline is first activated by ATP to form Pro-AMP and then transferred to the acceptor end of tRNA(Pro). As ProRS can inadvertently accommodate and process non-cognate amino acids such as alanine and cysteine, to avoid such errors it has two additional distinct editing activities against alanine. One activity is designated as 'pretransfer' editing and involves the tRNA(Pro)-independent hydrolysis of activated Ala-AMP. The other activity is designated 'posttransfer' editing and involves deacylation of mischarged Ala-tRNA(Pro). The misacylated Cys-tRNA(Pro) is not edited by ProRS. The chain is Proline--tRNA ligase from Bacillus cereus (strain G9842).